The following is a 216-amino-acid chain: Peroxiredoxin (216 aa).

Positions Val2–Ile158 constitute a Thioredoxin domain. The active-site Cysteine sulfenic acid (-SOH) intermediate is Cys46. A substrate-binding site is contributed by Arg121. A disulfide bridge links Cys205 with Cys211.

It belongs to the peroxiredoxin family. Prx6 subfamily. As to quaternary structure, homodecamer. Pentamer of dimers that assemble into a ring structure.

It is found in the cytoplasm. The catalysed reaction is a hydroperoxide + [thioredoxin]-dithiol = an alcohol + [thioredoxin]-disulfide + H2O. In terms of biological role, thiol-specific peroxidase that catalyzes the reduction of hydrogen peroxide and organic hydroperoxides to water and alcohols, respectively. Plays a role in cell protection against oxidative stress by detoxifying peroxides. In Pyrococcus abyssi (strain GE5 / Orsay), this protein is Peroxiredoxin.